A 199-amino-acid chain; its full sequence is Recombination protein RecR (199 aa).

The C4-type zinc finger occupies 58–73 (CKVCTNLTDQEVCNIC). The region spanning 81-176 (LLICVVEDPR…KVSRIAHGIP (96 aa)) is the Toprim domain.

The protein belongs to the RecR family.

Functionally, may play a role in DNA repair. It seems to be involved in an RecBC-independent recombinational process of DNA repair. It may act with RecF and RecO. The chain is Recombination protein RecR from Alkaliphilus oremlandii (strain OhILAs) (Clostridium oremlandii (strain OhILAs)).